A 185-amino-acid chain; its full sequence is Ribosome-recycling factor (185 aa).

The protein belongs to the RRF family.

Its subcellular location is the cytoplasm. Responsible for the release of ribosomes from messenger RNA at the termination of protein biosynthesis. May increase the efficiency of translation by recycling ribosomes from one round of translation to another. This chain is Ribosome-recycling factor, found in Citrifermentans bemidjiense (strain ATCC BAA-1014 / DSM 16622 / JCM 12645 / Bem) (Geobacter bemidjiensis).